Consider the following 276-residue polypeptide: Rhomboid protease GlpG (276 aa).

The next 6 membrane-spanning stretches (helical) occupy residues 94 to 114 (GPFT…QNLL), 142 to 162 (AFMH…WYLG), 169 to 189 (IGSG…GFVQ), 192 to 212 (FSGP…GYVW), 229 to 249 (LILF…GMAI), and 252 to 272 (GAHV…TLHG). The Nucleophile role is filled by Ser-201. His-254 is an active-site residue.

This sequence belongs to the peptidase S54 family.

Its subcellular location is the cell inner membrane. It carries out the reaction Cleaves type-1 transmembrane domains using a catalytic dyad composed of serine and histidine that are contributed by different transmembrane domains.. Its function is as follows. Rhomboid-type serine protease that catalyzes intramembrane proteolysis. The chain is Rhomboid protease GlpG from Klebsiella pneumoniae subsp. pneumoniae (strain ATCC 700721 / MGH 78578).